A 356-amino-acid polypeptide reads, in one-letter code: UDP-3-O-acylglucosamine N-acyltransferase (356 aa).

The active-site Proton acceptor is histidine 242.

Belongs to the transferase hexapeptide repeat family. LpxD subfamily. As to quaternary structure, homotrimer.

The enzyme catalyses a UDP-3-O-[(3R)-3-hydroxyacyl]-alpha-D-glucosamine + a (3R)-hydroxyacyl-[ACP] = a UDP-2-N,3-O-bis[(3R)-3-hydroxyacyl]-alpha-D-glucosamine + holo-[ACP] + H(+). It functions in the pathway bacterial outer membrane biogenesis; LPS lipid A biosynthesis. Its function is as follows. Catalyzes the N-acylation of UDP-3-O-acylglucosamine using 3-hydroxyacyl-ACP as the acyl donor. Is involved in the biosynthesis of lipid A, a phosphorylated glycolipid that anchors the lipopolysaccharide to the outer membrane of the cell. The sequence is that of UDP-3-O-acylglucosamine N-acyltransferase from Acinetobacter baumannii (strain ACICU).